The following is a 141-amino-acid chain: uncharacterized protein (141 aa).

A coiled-coil region spans residues 24–52 (KVQTALQKEAKTIKREQKKIKDEIDTFKT).

This is an uncharacterized protein from Invertebrate iridescent virus 6 (IIV-6).